We begin with the raw amino-acid sequence, 188 residues long: Holliday junction branch migration complex subunit RuvA (188 aa).

The tract at residues 1–62 is domain I; sequence MIVGVRGVLV…EDAQLLYGFL (62 aa). The segment at 63–135 is domain II; that stretch reads ELGEKKLFER…LSGFDTELII (73 aa). Residues 135 to 139 form a flexible linker region; sequence ISASE. The tract at residues 140–188 is domain III; the sequence is PKSLAVAQASEALESLGFKKDKISKALGSCSAVDTAILVKEALKLLQTI.

The protein belongs to the RuvA family. In terms of assembly, homotetramer. Forms an RuvA(8)-RuvB(12)-Holliday junction (HJ) complex. HJ DNA is sandwiched between 2 RuvA tetramers; dsDNA enters through RuvA and exits via RuvB. An RuvB hexamer assembles on each DNA strand where it exits the tetramer. Each RuvB hexamer is contacted by two RuvA subunits (via domain III) on 2 adjacent RuvB subunits; this complex drives branch migration. In the full resolvosome a probable DNA-RuvA(4)-RuvB(12)-RuvC(2) complex forms which resolves the HJ.

Its subcellular location is the cytoplasm. The RuvA-RuvB-RuvC complex processes Holliday junction (HJ) DNA during genetic recombination and DNA repair, while the RuvA-RuvB complex plays an important role in the rescue of blocked DNA replication forks via replication fork reversal (RFR). RuvA specifically binds to HJ cruciform DNA, conferring on it an open structure. The RuvB hexamer acts as an ATP-dependent pump, pulling dsDNA into and through the RuvAB complex. HJ branch migration allows RuvC to scan DNA until it finds its consensus sequence, where it cleaves and resolves the cruciform DNA. The polypeptide is Holliday junction branch migration complex subunit RuvA (Sulfurimonas denitrificans (strain ATCC 33889 / DSM 1251) (Thiomicrospira denitrificans (strain ATCC 33889 / DSM 1251))).